The following is a 125-amino-acid chain: Photosystem II extrinsic protein U (125 aa).

An N-terminal signal peptide occupies residues 1–29 (MKRLLSWLTGLVVIAGLLIGLLVPPSVSA).

It belongs to the PsbU family. As to quaternary structure, PSII is composed of 1 copy each of membrane proteins PsbA, PsbB, PsbC, PsbD, PsbE, PsbF, PsbH, PsbI, PsbJ, PsbK, PsbL, PsbM, PsbT, PsbX, PsbY, PsbZ, Psb30/Ycf12, peripheral proteins PsbO, CyanoQ (PsbQ), PsbU, PsbV and a large number of cofactors. It forms dimeric complexes.

The protein localises to the cellular thylakoid membrane. Functionally, one of the extrinsic, lumenal subunits of photosystem II (PSII). PSII is a light-driven water plastoquinone oxidoreductase, using light energy to abstract electrons from H(2)O, generating a proton gradient subsequently used for ATP formation. The extrinsic proteins stabilize the structure of photosystem II oxygen-evolving complex (OEC), the ion environment of oxygen evolution and protect the OEC against heat-induced inactivation. This Synechococcus sp. (strain CC9311) protein is Photosystem II extrinsic protein U.